Reading from the N-terminus, the 83-residue chain is UPF0729 protein CBG02799 (83 aa).

Positions glutamine 51–glutamine 83 are disordered. The span at threonine 67–threonine 76 shows a compositional bias: low complexity.

This sequence belongs to the UPF0729 family.

The sequence is that of UPF0729 protein CBG02799 from Caenorhabditis briggsae.